Reading from the N-terminus, the 181-residue chain is 6,7-dimethyl-8-ribityllumazine synthase (181 aa).

Residues F23, S61–E63, and A85–I87 contribute to the 5-amino-6-(D-ribitylamino)uracil site. Q90–T91 provides a ligand contact to (2S)-2-hydroxy-3-oxobutyl phosphate. H93 functions as the Proton donor in the catalytic mechanism. F118 lines the 5-amino-6-(D-ribitylamino)uracil pocket. Residue R132 coordinates (2S)-2-hydroxy-3-oxobutyl phosphate.

Belongs to the DMRL synthase family.

The enzyme catalyses (2S)-2-hydroxy-3-oxobutyl phosphate + 5-amino-6-(D-ribitylamino)uracil = 6,7-dimethyl-8-(1-D-ribityl)lumazine + phosphate + 2 H2O + H(+). It participates in cofactor biosynthesis; riboflavin biosynthesis; riboflavin from 2-hydroxy-3-oxobutyl phosphate and 5-amino-6-(D-ribitylamino)uracil: step 1/2. In terms of biological role, catalyzes the formation of 6,7-dimethyl-8-ribityllumazine by condensation of 5-amino-6-(D-ribitylamino)uracil with 3,4-dihydroxy-2-butanone 4-phosphate. This is the penultimate step in the biosynthesis of riboflavin. The chain is 6,7-dimethyl-8-ribityllumazine synthase from Synechococcus elongatus (strain ATCC 33912 / PCC 7942 / FACHB-805) (Anacystis nidulans R2).